The following is a 211-amino-acid chain: FMN-dependent NADH:quinone oxidoreductase 2 (211 aa).

17 to 19 (SYS) is an FMN binding site.

Belongs to the azoreductase type 1 family. In terms of assembly, homodimer. FMN is required as a cofactor.

It carries out the reaction 2 a quinone + NADH + H(+) = 2 a 1,4-benzosemiquinone + NAD(+). The enzyme catalyses N,N-dimethyl-1,4-phenylenediamine + anthranilate + 2 NAD(+) = 2-(4-dimethylaminophenyl)diazenylbenzoate + 2 NADH + 2 H(+). With respect to regulation, strongly inhibited by Pb(2+) and weakly inhibited by Cu(2+), Hg(2+) and Fe(2+). Stable in presence of Ag(+). Its function is as follows. Quinone reductase that provides resistance to thiol-specific stress caused by electrophilic quinones. Contributes to resistance to 2-methylhydroquinone (2-MHQ) and catechol. Exhibits NADH-dependent 2,6-dichloroindophenol (DCIP) oxidoreductase activity. In terms of biological role, also exhibits azoreductase activity. Catalyzes the reductive cleavage of the azo bond in aromatic azo compounds to the corresponding amines. Can reduce methyl red. The sequence is that of FMN-dependent NADH:quinone oxidoreductase 2 from Bacillus subtilis (strain 168).